The chain runs to 82 residues: Cytochrome b559 subunit alpha (82 aa).

The chain crosses the membrane as a helical span at residues 22–36 (IIHAVTLPAIFIAGF). Residue histidine 24 coordinates heme.

It belongs to the PsbE/PsbF family. As to quaternary structure, heterodimer of an alpha subunit and a beta subunit. PSII is composed of 1 copy each of membrane proteins PsbA, PsbB, PsbC, PsbD, PsbE, PsbF, PsbH, PsbI, PsbJ, PsbK, PsbL, PsbM, PsbT, PsbX, PsbY, Psb30/Ycf12, peripheral proteins PsbO, CyanoQ (PsbQ), PsbU, PsbV and a large number of cofactors. It forms dimeric complexes. Requires heme b as cofactor.

The protein localises to the cellular thylakoid membrane. This b-type cytochrome is tightly associated with the reaction center of photosystem II (PSII). PSII is a light-driven water:plastoquinone oxidoreductase that uses light energy to abstract electrons from H(2)O, generating O(2) and a proton gradient subsequently used for ATP formation. It consists of a core antenna complex that captures photons, and an electron transfer chain that converts photonic excitation into a charge separation. The protein is Cytochrome b559 subunit alpha of Prochlorococcus marinus (strain SARG / CCMP1375 / SS120).